The primary structure comprises 899 residues: Protein translocase subunit SecA (899 aa).

ATP-binding positions include glutamine 87, 105–109 (GEGKT), and aspartate 516. Residues cysteine 884, cysteine 886, cysteine 895, and histidine 896 each coordinate Zn(2+).

It belongs to the SecA family. As to quaternary structure, monomer and homodimer. Part of the essential Sec protein translocation apparatus which comprises SecA, SecYEG and auxiliary proteins SecDF. Other proteins may also be involved. Zn(2+) is required as a cofactor.

Its subcellular location is the cell inner membrane. The protein resides in the cytoplasm. The enzyme catalyses ATP + H2O + cellular proteinSide 1 = ADP + phosphate + cellular proteinSide 2.. Functionally, part of the Sec protein translocase complex. Interacts with the SecYEG preprotein conducting channel. Has a central role in coupling the hydrolysis of ATP to the transfer of proteins into and across the cell membrane, serving as an ATP-driven molecular motor driving the stepwise translocation of polypeptide chains across the membrane. The protein is Protein translocase subunit SecA of Borreliella burgdorferi (strain ATCC 35210 / DSM 4680 / CIP 102532 / B31) (Borrelia burgdorferi).